We begin with the raw amino-acid sequence, 211 residues long: Ribosomal RNA small subunit methyltransferase G (211 aa).

S-adenosyl-L-methionine is bound by residues glycine 76, leucine 81, 127–128 (VE), and arginine 142.

The protein belongs to the methyltransferase superfamily. RNA methyltransferase RsmG family.

The protein resides in the cytoplasm. The catalysed reaction is guanosine(527) in 16S rRNA + S-adenosyl-L-methionine = N(7)-methylguanosine(527) in 16S rRNA + S-adenosyl-L-homocysteine. Functionally, specifically methylates the N7 position of guanine in position 527 of 16S rRNA. This Vibrio campbellii (strain ATCC BAA-1116) protein is Ribosomal RNA small subunit methyltransferase G.